Consider the following 175-residue polypeptide: MTGKELNKIVAAILFASLIAMIVRFVANILYKPNLQVLNRGYSIAIQESSVNTNATVIVQEPVNIPEVMKTANANHGREIVKKCLMCHSLDKDGPNKLGPHLWNIVGRSKASITDYKYSFAISKLGGVWDDENLFAFLHKPSSYAPGTKMSFAGISKPQDIADVILFLKNYVHDK.

Topologically, residues Met-1–Lys-8 are cytoplasmic. Residues Ile-9–Ile-29 traverse the membrane as a helical; Signal-anchor segment. The Periplasmic portion of the chain corresponds to Leu-30–Lys-175. Heme c is bound by residues Cys-84, Cys-87, His-88, and Met-150.

The protein belongs to the cytochrome c family. Binds 1 heme c group covalently per subunit.

The protein resides in the cell membrane. May be involved in electron transfer from bc1 complex to aa3. This is Cytochrome c homolog (cycM) from Rickettsia typhi (strain ATCC VR-144 / Wilmington).